A 578-amino-acid polypeptide reads, in one-letter code: Arginine--tRNA ligase (578 aa).

The short motif at 127–137 (PNLAKEMHVGH) is the 'HIGH' region element.

Belongs to the class-I aminoacyl-tRNA synthetase family. As to quaternary structure, monomer.

The protein localises to the cytoplasm. It catalyses the reaction tRNA(Arg) + L-arginine + ATP = L-arginyl-tRNA(Arg) + AMP + diphosphate. In Pseudomonas putida (strain ATCC 47054 / DSM 6125 / CFBP 8728 / NCIMB 11950 / KT2440), this protein is Arginine--tRNA ligase.